The following is an 81-amino-acid chain: Short neurotoxin 1 (81 aa).

The N-terminal stretch at 1–21 is a signal peptide; that stretch reads MKTLLLTLVVVTIVFLDLGYT. 4 disulfide bridges follow: cysteine 24–cysteine 43, cysteine 38–cysteine 60, cysteine 62–cysteine 73, and cysteine 74–cysteine 79.

Belongs to the three-finger toxin family. Short-chain subfamily. Type I alpha-neurotoxin sub-subfamily. In terms of tissue distribution, expressed by the venom gland.

It is found in the secreted. Its function is as follows. Binds to muscle nicotinic acetylcholine receptor (nAChR) and inhibit acetylcholine from binding to the receptor, thereby impairing neuromuscular transmission. This Notechis scutatus scutatus (Mainland tiger snake) protein is Short neurotoxin 1.